The following is a 228-amino-acid chain: Response regulator MprA (228 aa).

The Response regulatory domain occupies 2–116; the sequence is RILAVDDDRA…ELLARIRALL (115 aa). The residue at position 46 (D46) is a 4-aspartylphosphate. Positions 127 to 225 form a DNA-binding region, ompR/PhoB-type; the sequence is SVAMSFSDLT…VRGVGYVLRE (99 aa).

In terms of processing, phosphorylated and dephosphorylated by MprB.

The protein resides in the cytoplasm. In terms of biological role, member of the two-component regulatory system MprB/MprA which contributes to maintaining a balance among several systems involved in stress resistance and is required for establishment and maintenance of persistent infection in the host. Functions as a transcriptional regulator that recognizes a 19-bp nucleotide motif comprizing two loosely conserved 8-bp direct DNA-binding motif repeats separated by a 3-bp spacer region. The sequence is that of Response regulator MprA (mprA) from Mycobacterium leprae (strain TN).